Consider the following 208-residue polypeptide: Imidazoleglycerol-phosphate dehydratase (208 aa).

The protein belongs to the imidazoleglycerol-phosphate dehydratase family.

The protein resides in the cytoplasm. The enzyme catalyses D-erythro-1-(imidazol-4-yl)glycerol 3-phosphate = 3-(imidazol-4-yl)-2-oxopropyl phosphate + H2O. Its pathway is amino-acid biosynthesis; L-histidine biosynthesis; L-histidine from 5-phospho-alpha-D-ribose 1-diphosphate: step 6/9. The chain is Imidazoleglycerol-phosphate dehydratase from Symbiobacterium thermophilum (strain DSM 24528 / JCM 14929 / IAM 14863 / T).